The sequence spans 237 residues: E3 ubiquitin-protein ligase RNF166 (237 aa).

The RING-type zinc-finger motif lies at 33–73 (CPICLEVYHRPVAIGSCGHTFCGECLQPCLQVPSPLCPLCR). Zn(2+) contacts are provided by C98, C101, H113, and C117. The segment at 98–117 (CRGCNKKVTLAKMRAHISSC) adopts a C2HC RNF-type zinc-finger fold. The 17-residue stretch at 221–237 (DEEAAFQAALALSLSEN) folds into the UIM domain.

The protein resides in the cytoplasm. The catalysed reaction is S-ubiquitinyl-[E2 ubiquitin-conjugating enzyme]-L-cysteine + [acceptor protein]-L-lysine = [E2 ubiquitin-conjugating enzyme]-L-cysteine + N(6)-ubiquitinyl-[acceptor protein]-L-lysine.. It functions in the pathway protein modification; protein ubiquitination. E3 ubiquitin-protein ligase that promotes the ubiquitination of different substrates. In turn, participates in different biological processes including interferon production or autophagy. Plays a role in the activation of RNA virus-induced interferon-beta production by promoting the ubiquitination of TRAF3 and TRAF6. Also plays a role in the early recruitment of autophagy adapters to bacteria. Mediates 'Lys-29' and 'Lys-33'-linked ubiquitination of SQSTM1 leading to xenophagic targeting of bacteria and inhibition of their replication. This Mus musculus (Mouse) protein is E3 ubiquitin-protein ligase RNF166 (Rnf166).